A 235-amino-acid chain; its full sequence is Ion-translocating oxidoreductase complex subunit E (235 aa).

A run of 5 helical transmembrane segments spans residues 63 to 83 (LGLS…ISLF), 93 to 113 (IPIY…LMNA), 117 to 137 (TLYQ…IIIG), 152 to 172 (IWDG…LGAL), and 206 to 226 (SFLL…LLAI).

It belongs to the NqrDE/RnfAE family. The complex is composed of six subunits: RnfA, RnfB, RnfC, RnfD, RnfE and RnfG.

The protein resides in the cell inner membrane. In terms of biological role, part of a membrane-bound complex that couples electron transfer with translocation of ions across the membrane. This chain is Ion-translocating oxidoreductase complex subunit E, found in Haemophilus influenzae (strain PittEE).